Here is a 607-residue protein sequence, read N- to C-terminus: Developmental gene 1062 protein (607 aa).

3 disordered regions span residues 62–84, 334–451, and 568–602; these read LQGQQQQQQQQQQNHSQQQHNNQ, ICDD…SNFQ, and DNNTQSQMNNSISVNNHHHHHHHQPNNSNLTNDLL. Low complexity predominate over residues 334 to 363; the sequence is ICDDSSNSSTPSLSSYSNGNNKYNNNNNDS. Over residues 364-382 the composition is skewed to acidic residues; that stretch reads SESDESDDDDNNDDDDNDS. 2 stretches are compositionally biased toward low complexity: residues 383–451 and 568–582; these read IDFN…SNFQ and DNNTQSQMNNSISVN.

The sequence is that of Developmental gene 1062 protein (DG1062) from Dictyostelium discoideum (Social amoeba).